Here is a 429-residue protein sequence, read N- to C-terminus: Serine--tRNA ligase (429 aa).

235–237 is an L-serine binding site; it reads TAE. 266-268 provides a ligand contact to ATP; sequence RSE. An L-serine-binding site is contributed by Glu289. 353–356 is an ATP binding site; it reads EISS. Ser389 contacts L-serine.

The protein belongs to the class-II aminoacyl-tRNA synthetase family. Type-1 seryl-tRNA synthetase subfamily. Homodimer. The tRNA molecule binds across the dimer.

It is found in the cytoplasm. The catalysed reaction is tRNA(Ser) + L-serine + ATP = L-seryl-tRNA(Ser) + AMP + diphosphate + H(+). It carries out the reaction tRNA(Sec) + L-serine + ATP = L-seryl-tRNA(Sec) + AMP + diphosphate + H(+). Its pathway is aminoacyl-tRNA biosynthesis; selenocysteinyl-tRNA(Sec) biosynthesis; L-seryl-tRNA(Sec) from L-serine and tRNA(Sec): step 1/1. Functionally, catalyzes the attachment of serine to tRNA(Ser). Is also able to aminoacylate tRNA(Sec) with serine, to form the misacylated tRNA L-seryl-tRNA(Sec), which will be further converted into selenocysteinyl-tRNA(Sec). The protein is Serine--tRNA ligase of Histophilus somni (strain 129Pt) (Haemophilus somnus).